The chain runs to 95 residues: uncharacterized protein (95 aa).

A helical transmembrane segment spans residues 29-53 (LVSTATCMAALFLRFKLIAWVAFIL).

It is found in the membrane. This is an uncharacterized protein from Schizosaccharomyces pombe (strain 972 / ATCC 24843) (Fission yeast).